The following is a 267-amino-acid chain: Ribosomal RNA small subunit methyltransferase A (267 aa).

Residues Asn-18, Leu-20, Gly-45, Glu-66, Asp-91, and Asn-112 each coordinate S-adenosyl-L-methionine.

It belongs to the class I-like SAM-binding methyltransferase superfamily. rRNA adenine N(6)-methyltransferase family. RsmA subfamily.

It localises to the cytoplasm. It carries out the reaction adenosine(1518)/adenosine(1519) in 16S rRNA + 4 S-adenosyl-L-methionine = N(6)-dimethyladenosine(1518)/N(6)-dimethyladenosine(1519) in 16S rRNA + 4 S-adenosyl-L-homocysteine + 4 H(+). Its function is as follows. Specifically dimethylates two adjacent adenosines (A1518 and A1519) in the loop of a conserved hairpin near the 3'-end of 16S rRNA in the 30S particle. May play a critical role in biogenesis of 30S subunits. The protein is Ribosomal RNA small subunit methyltransferase A of Shewanella sediminis (strain HAW-EB3).